Consider the following 1410-residue polypeptide: DNA-directed RNA polymerase subunit beta' (1410 aa).

The Zn(2+) site is built by cysteine 69, cysteine 71, cysteine 84, and cysteine 87. Residues aspartate 461, aspartate 463, and aspartate 465 each contribute to the Mg(2+) site. Zn(2+)-binding residues include cysteine 810, cysteine 884, cysteine 891, and cysteine 894.

Belongs to the RNA polymerase beta' chain family. In terms of assembly, the RNAP catalytic core consists of 2 alpha, 1 beta, 1 beta' and 1 omega subunit. When a sigma factor is associated with the core the holoenzyme is formed, which can initiate transcription. It depends on Mg(2+) as a cofactor. The cofactor is Zn(2+).

It carries out the reaction RNA(n) + a ribonucleoside 5'-triphosphate = RNA(n+1) + diphosphate. Its function is as follows. DNA-dependent RNA polymerase catalyzes the transcription of DNA into RNA using the four ribonucleoside triphosphates as substrates. The sequence is that of DNA-directed RNA polymerase subunit beta' from Ehrlichia chaffeensis (strain ATCC CRL-10679 / Arkansas).